The sequence spans 477 residues: UDP-N-acetylmuramate--L-alanine ligase (477 aa).

112-118 (GAHGKTT) serves as a coordination point for ATP.

The protein belongs to the MurCDEF family.

It localises to the cytoplasm. It carries out the reaction UDP-N-acetyl-alpha-D-muramate + L-alanine + ATP = UDP-N-acetyl-alpha-D-muramoyl-L-alanine + ADP + phosphate + H(+). It participates in cell wall biogenesis; peptidoglycan biosynthesis. In terms of biological role, cell wall formation. The protein is UDP-N-acetylmuramate--L-alanine ligase of Delftia acidovorans (strain DSM 14801 / SPH-1).